The following is a 615-amino-acid chain: DNA mismatch repair protein MutL (615 aa).

Residues histidine 362 to tyrosine 397 are disordered. A compositionally biased stretch (low complexity) spans alanine 373–alanine 387.

The protein belongs to the DNA mismatch repair MutL/HexB family.

Functionally, this protein is involved in the repair of mismatches in DNA. It is required for dam-dependent methyl-directed DNA mismatch repair. May act as a 'molecular matchmaker', a protein that promotes the formation of a stable complex between two or more DNA-binding proteins in an ATP-dependent manner without itself being part of a final effector complex. The protein is DNA mismatch repair protein MutL of Escherichia coli O81 (strain ED1a).